A 338-amino-acid polypeptide reads, in one-letter code: Clavatol oxidase claD (338 aa).

The region spanning 193 to 299 (DPMSLLRLLH…RYSVVFFYDG (107 aa)) is the Fe2OG dioxygenase domain. Fe cation is bound by residues His222, Asp224, and His280. Residue Arg290 coordinates 2-oxoglutarate.

The protein belongs to the iron/ascorbate-dependent oxidoreductase family. It depends on Fe(2+) as a cofactor.

It catalyses the reaction clavatol + 2-oxoglutarate + O2 = hydroxyclavatol + succinate + CO2. Its pathway is secondary metabolite biosynthesis. Its function is as follows. 2-oxoglutarate-dependent dioxygenase; part of the cla gene cluster that produces clavatol and ortho-quinone methide. The clavatol biosynthesis cluster cla and the terrestric acid cluster tra are both involved in the production of peniphenones and penilactones. The non-reducing PKS claF is responsible for the formation of clavatol from successive condensations of 3 malonyl-CoA units, presumably with a simple acetyl-CoA starter unit, and 2 methylation steps. The esterase claE probably collaborates with claF by catalyzing the hydrolysis of ACP-bound acyl intermediates to free the ACP from stalled intermediates. The clavatol oxidase claD then converts clavatol to hydroxyclavatol. Spontaneous dehydration of hydroxyclavatol leads to the accumulation of the highly active ortho-quinone methide. On the other hand, the PKS-NRPS hybrid traA is involved in the formation of crustosic acid, with the help of traB and traD. The polyketide synthase module (PKS) of traA is responsible for the synthesis of the polyketide backbone via the condensation of an acetyl-CoA starter unit with 3 malonyl-CoA units. The downstream nonribosomal peptide synthetase (NRPS) module then amidates the carboxyl end of the polyketide with L-malic acid. Because traA lacks a designated enoylreductase (ER) domain, the required activity is provided the enoyl reductase traG. Crustosic acid undergoes decarboxylation and isomerization to the terrestric acid, catalyzed by the 2-oxoglutarate-dependent dioxygenase traH. Both acids are further converted to the 2 gamma-butyrolactones (R)-5-methyltetronic acid and (S)-5-carboxylmethyltetronic acid, with involvement of the cytochrome P450 monooxygenase claJ. Spontaneous addition of the methide to these gamma-butyrolactones leads to peniphenone D and penilactone D, which undergo again stereospecific attacking by methide to give penilactones A and B. In Penicillium crustosum (Blue mold fungus), this protein is Clavatol oxidase claD.